Consider the following 158-residue polypeptide: MSGIALSRLAQERKAWRKDHPFGFVAVPTKNPDGTMNLMNWECAIPGKKGTPWEGGLFKLRMLFKDDYPSSPPKCKFEPPLFHPNVYPSGTVCLSILEEDKDWRPAITIKQILLGIQELLNEPNIQDPAQAEAYTIYCQNRVEYEKRVRAQAKKFAPS.

The UBC core domain maps to 4-157 (IALSRLAQER…VRAQAKKFAP (154 aa)). The interval 13 to 18 (RKAWRK) is interaction with SUMO1. Cys-93 (glycyl thioester intermediate) is an active-site residue.

This sequence belongs to the ubiquitin-conjugating enzyme family. As to quaternary structure, interacts with SOX9.

The protein localises to the nucleus. It localises to the cytoplasm. It functions in the pathway protein modification; protein sumoylation. Accepts the ubiquitin-like proteins SUMO1, SUMO2 and SUMO3 from the UBLE1A-UBLE1B E1 complex and catalyzes their covalent attachment to other proteins with the help of an E3 ligase such as RANBP2 or CBX4. Essential for nuclear architecture and chromosome segregation. The sequence is that of SUMO-conjugating enzyme UBC9 (UBE2I) from Gallus gallus (Chicken).